Consider the following 380-residue polypeptide: Cytochrome b (380 aa).

The next 4 membrane-spanning stretches (helical) occupy residues 34 to 54, 78 to 99, 114 to 134, and 179 to 199; these read FGWL…FLAM, WLLR…YFHI, WNIG…GYVL, and FFTF…IHLL. Residues H84 and H98 each contribute to the heme b site. Heme b contacts are provided by H183 and H197. H202 lines the a ubiquinone pocket. A run of 4 helical transmembrane segments spans residues 227-247, 289-309, 321-341, and 348-368; these read FKDL…STFA, LGGV…PIIH, AAKA…WIGG, and FISI…LIIP.

Belongs to the cytochrome b family. In terms of assembly, the cytochrome bc1 complex contains 3 respiratory subunits (MT-CYB, CYC1 and UQCRFS1), 2 core proteins (UQCRC1 and UQCRC2) and probably 6 low-molecular weight proteins. Heme b is required as a cofactor.

The protein resides in the mitochondrion inner membrane. Component of the ubiquinol-cytochrome c reductase complex (complex III or cytochrome b-c1 complex) that is part of the mitochondrial respiratory chain. The b-c1 complex mediates electron transfer from ubiquinol to cytochrome c. Contributes to the generation of a proton gradient across the mitochondrial membrane that is then used for ATP synthesis. This Rana dybowskii (Dybovsky's frog) protein is Cytochrome b (mt-cyb).